Here is a 224-residue protein sequence, read N- to C-terminus: Flagellar L-ring protein (224 aa).

The signal sequence occupies residues 1–15 (MARYFILAVALLLTA). C16 carries the N-palmitoyl cysteine lipid modification. Residue C16 is the site of S-diacylglycerol cysteine attachment.

This sequence belongs to the FlgH family. As to quaternary structure, the basal body constitutes a major portion of the flagellar organelle and consists of four rings (L,P,S, and M) mounted on a central rod.

The protein resides in the cell outer membrane. It localises to the bacterial flagellum basal body. Functionally, assembles around the rod to form the L-ring and probably protects the motor/basal body from shearing forces during rotation. This is Flagellar L-ring protein from Shewanella sp. (strain MR-7).